The chain runs to 93 residues: UPF0058 protein AF_0738 (93 aa).

Belongs to the UPF0058 family.

The polypeptide is UPF0058 protein AF_0738 (Archaeoglobus fulgidus (strain ATCC 49558 / DSM 4304 / JCM 9628 / NBRC 100126 / VC-16)).